An 884-amino-acid polypeptide reads, in one-letter code: Formin-like protein 9 (884 aa).

An N-terminal signal peptide occupies residues 1–19; the sequence is MGMAMRCVLVLFSVSPVLL. The helical transmembrane segment at 140-160 threads the bilayer; that stretch reads IVALGVVGLCLVVLGVVIAAF. Disordered stretches follow at residues 179–204, 295–318, and 403–473; these read FHHG…PDPL, THDS…LSPK, and TMTN…PLPR. Residues 300 to 310 are compositionally biased toward low complexity; that stretch reads SDSSYQSLSPD. Residues 429–443 are compositionally biased toward pro residues; the sequence is KPAPPPPPQKNPPPN. The FH2 domain occupies 464–884; the sequence is VGKDGSPLPR…QTLNLVLPLK (421 aa).

The protein belongs to the formin-like family. Class-I subfamily.

The protein localises to the membrane. The sequence is that of Formin-like protein 9 (FH9) from Oryza sativa subsp. indica (Rice).